Here is a 156-residue protein sequence, read N- to C-terminus: MPKGSGKVLSQNKKANHDYFIEETYETGIVLQGTEIKSIRAGRVNMKDSFAKIERGEVFLHNMHISPYEQGNRYNHDPLRTRKLLMHRKEINKLIGLTKEKGYSLVPLKLYLKNGFAKVLIGLGKGKKTYDKREDLKRKDAKREIERAFRDRQKGF.

This sequence belongs to the SmpB family.

The protein resides in the cytoplasm. In terms of biological role, required for rescue of stalled ribosomes mediated by trans-translation. Binds to transfer-messenger RNA (tmRNA), required for stable association of tmRNA with ribosomes. tmRNA and SmpB together mimic tRNA shape, replacing the anticodon stem-loop with SmpB. tmRNA is encoded by the ssrA gene; the 2 termini fold to resemble tRNA(Ala) and it encodes a 'tag peptide', a short internal open reading frame. During trans-translation Ala-aminoacylated tmRNA acts like a tRNA, entering the A-site of stalled ribosomes, displacing the stalled mRNA. The ribosome then switches to translate the ORF on the tmRNA; the nascent peptide is terminated with the 'tag peptide' encoded by the tmRNA and targeted for degradation. The ribosome is freed to recommence translation, which seems to be the essential function of trans-translation. The protein is SsrA-binding protein of Bacillus velezensis (strain DSM 23117 / BGSC 10A6 / LMG 26770 / FZB42) (Bacillus amyloliquefaciens subsp. plantarum).